We begin with the raw amino-acid sequence, 396 residues long: NADH-quinone oxidoreductase subunit D (396 aa).

Belongs to the complex I 49 kDa subunit family. In terms of assembly, NDH-1 is composed of 14 different subunits. Subunits NuoB, C, D, E, F, and G constitute the peripheral sector of the complex.

The protein resides in the cell inner membrane. The enzyme catalyses a quinone + NADH + 5 H(+)(in) = a quinol + NAD(+) + 4 H(+)(out). Functionally, NDH-1 shuttles electrons from NADH, via FMN and iron-sulfur (Fe-S) centers, to quinones in the respiratory chain. The immediate electron acceptor for the enzyme in this species is believed to be ubiquinone. Couples the redox reaction to proton translocation (for every two electrons transferred, four hydrogen ions are translocated across the cytoplasmic membrane), and thus conserves the redox energy in a proton gradient. This is NADH-quinone oxidoreductase subunit D from Bartonella henselae (strain ATCC 49882 / DSM 28221 / CCUG 30454 / Houston 1) (Rochalimaea henselae).